Consider the following 738-residue polypeptide: Glycogen [starch] synthase, muscle (738 aa).

Residue serine 8 is modified to Phosphoserine; by AMPK and PKA. Serine 11 bears the Phosphoserine mark. Residue lysine 39 participates in UDP binding. The UDP-alpha-D-glucose site is built by histidine 205 and arginine 211. Positions 291, 292, 294, 297, and 301 each coordinate alpha-D-glucose 6-phosphate. Arginine 331 is a binding site for UDP. Residue arginine 331 participates in UDP-alpha-D-glucose binding. Serine 412 bears the Phosphoserine mark. Residue histidine 501 coordinates alpha-D-glucose 6-phosphate. Glutamate 510, tryptophan 512, and glycine 513 together coordinate UDP-alpha-D-glucose. Threonine 515 provides a ligand contact to UDP. Residues arginine 582 and arginine 586 each coordinate alpha-D-glucose 6-phosphate. The disordered stretch occupies residues 632–738 (QGYRYPRPAS…PTSSLGEERN (107 aa)). Phosphoserine is present on residues serine 641 and serine 645. Position 649 is a phosphoserine; by GSK3-alpha and GSK3-beta (serine 649). Serine 652, serine 653, serine 657, and serine 672 each carry phosphoserine. A compositionally biased stretch (basic and acidic residues) spans 682–695 (AKDRRNIRAPEWPR). Phosphoserine occurs at positions 698, 709, and 711. Positions 698–738 (SCSSSTGGSKRSNSVDTGPSSSLSTPTEPLSPTSSLGEERN) are enriched in low complexity. Position 722 is a phosphothreonine (threonine 722). Phosphoserine occurs at positions 728 and 732.

This sequence belongs to the glycosyltransferase 3 family. As to quaternary structure, part of the GYS1-GYG1 complex, a heterooctamer composed of a tetramer of GYS1 and 2 dimers of GYG1, where each GYS1 protomer binds to one GYG1 subunit (via GYG1 C-terminus); the GYS1 tetramer may dissociate from GYG1 dimers to continue glycogen polymerization on its own. In terms of processing, phosphorylation at Ser-8 by AMPK inactivates the enzyme activity. Primed phosphorylation at Ser-657 (site 5) by CSNK2A1 and CSNK2A2 is required for inhibitory phosphorylation at Ser-641 (site 3a), Ser-645 (site 3b), Ser-649 (site 3c) and Ser-653 (site 4) by GSK3A an GSK3B. Phosphorylated at Ser-641 by PASK, leading to inactivation; phosphorylation by PASK is inhibited by glycogen. Phosphorylated at Ser-641 by DYRK2, leading to inactivation. Dephosphorylation at Ser-641 and Ser-645 by PP1 activates the enzyme.

It catalyses the reaction [(1-&gt;4)-alpha-D-glucosyl](n) + UDP-alpha-D-glucose = [(1-&gt;4)-alpha-D-glucosyl](n+1) + UDP + H(+). It functions in the pathway glycan biosynthesis; glycogen biosynthesis. Its activity is regulated as follows. Allosteric activation by glucose-6-phosphate. Phosphorylation reduces the activity towards UDP-glucose. When in the non-phosphorylated state, glycogen synthase does not require glucose-6-phosphate as an allosteric activator; when phosphorylated it does. Glycogen synthase participates in the glycogen biosynthetic process along with glycogenin and glycogen branching enzyme. Extends the primer composed of a few glucose units formed by glycogenin by adding new glucose units to it. In this context, glycogen synthase transfers the glycosyl residue from UDP-Glc to the non-reducing end of alpha-1,4-glucan. The chain is Glycogen [starch] synthase, muscle (Gys1) from Rattus norvegicus (Rat).